Consider the following 904-residue polypeptide: Alanine--tRNA ligase (904 aa).

Zn(2+)-binding residues include histidine 600, histidine 604, cysteine 704, and histidine 708.

This sequence belongs to the class-II aminoacyl-tRNA synthetase family. Requires Zn(2+) as cofactor.

Its subcellular location is the cytoplasm. It carries out the reaction tRNA(Ala) + L-alanine + ATP = L-alanyl-tRNA(Ala) + AMP + diphosphate. Its function is as follows. Catalyzes the attachment of alanine to tRNA(Ala) in a two-step reaction: alanine is first activated by ATP to form Ala-AMP and then transferred to the acceptor end of tRNA(Ala). Also edits incorrectly charged Ser-tRNA(Ala) and Gly-tRNA(Ala) via its editing domain. The protein is Alanine--tRNA ligase of Metallosphaera sedula (strain ATCC 51363 / DSM 5348 / JCM 9185 / NBRC 15509 / TH2).